A 290-amino-acid polypeptide reads, in one-letter code: Zinc finger matrin-type protein 3 (290 aa).

Matrin-type zinc fingers lie at residues 70 to 100 (LFCK…KLRN) and 148 to 178 (DYCK…RLRL). 2 disordered regions span residues 182–203 (QSHS…EGSE) and 266–290 (ESKQ…GYVQ). A Matrin-type 3 zinc finger spans residues 246 to 276 (FYCSMCNVGAGEEVEFRQHLESKQHKSKVSE). Residues 266-283 (ESKQHKSKVSEQRYRSEM) are compositionally biased toward basic and acidic residues.

Interacts with dsRNA. As to expression, constitutively expressed in brain and testis. Also expressed in lung, kidney and spleen after whole body gamma irradiation.

The protein localises to the nucleus. The protein resides in the nucleolus. Functionally, acts as a bona fide target gene of p53/TP53. May play a role in the TP53-dependent growth regulatory pathway. May contribute to TP53-mediated apoptosis by regulation of TP53 expression and translocation to the nucleus and nucleolus. The sequence is that of Zinc finger matrin-type protein 3 from Mus musculus (Mouse).